Consider the following 227-residue polypeptide: DNA repair protein RecO (227 aa).

It belongs to the RecO family.

Involved in DNA repair and RecF pathway recombination. The chain is DNA repair protein RecO from Pseudomonas putida (strain ATCC 700007 / DSM 6899 / JCM 31910 / BCRC 17059 / LMG 24140 / F1).